The sequence spans 235 residues: Secretory carrier-associated membrane protein 5 (235 aa).

The Cytoplasmic portion of the chain corresponds to 1 to 39; it reads MAEKVNNFPPLPKFIPLKPCFYQDFEADIPPQHVSMTKR. The helical transmembrane segment at 40-60 threads the bilayer; it reads LYYLWMLNSVTLAVNLVGCLA. At 61–67 the chain is on the extracellular side; that stretch reads WLIGGGG. A helical membrane pass occupies residues 68–88; sequence ATNFGLAFLWLILFTPCSYVC. Over 89-102 the chain is Cytoplasmic; that stretch reads WFRPIYKAFKTDSS. The helical transmembrane segment at 103 to 125 threads the bilayer; the sequence is FSFMAFFFTFMAQLVISIIQAVG. Topologically, residues 126 to 148 are extracellular; that stretch reads IPGWGVCGWIATISFFGTNIGSA. The chain crosses the membrane as a helical span at residues 149 to 169; that stretch reads VVMLIPTVMFTVMAVFSFIAL. The Cytoplasmic portion of the chain corresponds to 170–235; it reads SMVHKFYRGS…TPNYTYSNEM (66 aa).

It belongs to the SCAMP family. SCAMP5 subfamily. In terms of assembly, interacts (via C-terminal part) with SYT1 and SYT2; interaction with synaptotagmins making a link with the SNARE molecules. Interacts with SLC9A7. Expressed both by neuronal and non-neuronal tissues. Expressed in brain, stomach, thyroid, spinal cord, lymph node, trachea, adrenal gland, bone marrow and in the different parts of brain. In thyroid tissues, it is expressed by the follicular epithelial cells. In the adrenal gland tissues it is detected in the zona fasciculata of the cortex region (at protein level).

It is found in the cell membrane. Its subcellular location is the golgi apparatus membrane. The protein localises to the golgi apparatus. It localises to the trans-Golgi network membrane. The protein resides in the recycling endosome membrane. It is found in the cytoplasmic vesicle. Its subcellular location is the secretory vesicle. The protein localises to the synaptic vesicle membrane. Functionally, required for the calcium-dependent exocytosis of signal sequence-containing cytokines such as CCL5. Probably acts in cooperation with the SNARE machinery. May play a role in accumulation of expanded polyglutamine (polyQ) protein huntingtin (HTT) in case of endoplasmic reticulum stress by inhibiting the endocytosis pathway. This is Secretory carrier-associated membrane protein 5 (SCAMP5) from Homo sapiens (Human).